Here is a 133-residue protein sequence, read N- to C-terminus: MIKAWFDTNKYVAMHMQTEPFVYIKIICIKEEERPHNSTHTHTHTLSHTQFEIAPIGLGNRITSHSKYTIFSITHTHCIKPFVSKKYKNTAQRAVSGSICDCLFFFWFSSVQNEGSKNFQIKQYSSPEICFRV.

This is an uncharacterized protein from Saccharomyces cerevisiae (strain ATCC 204508 / S288c) (Baker's yeast).